We begin with the raw amino-acid sequence, 125 residues long: Prefoldin subunit beta (125 aa).

This sequence belongs to the prefoldin subunit beta family. In terms of assembly, heterohexamer of two alpha and four beta subunits.

The protein localises to the cytoplasm. Its function is as follows. Molecular chaperone capable of stabilizing a range of proteins. Seems to fulfill an ATP-independent, HSP70-like function in archaeal de novo protein folding. The sequence is that of Prefoldin subunit beta from Sulfolobus acidocaldarius (strain ATCC 33909 / DSM 639 / JCM 8929 / NBRC 15157 / NCIMB 11770).